The chain runs to 772 residues: Semaphorin-3A (772 aa).

Positions 1 to 20 (MGWFTGIACLFWGILLTARA) are cleaved as a signal peptide. Residues 31–514 (RLKLSYKEML…STAGVAQLPL (484 aa)) form the Sema domain. A glycan (N-linked (GlcNAc...) asparagine) is linked at N53. A disulfide bridge links C103 with C114. N125 carries an N-linked (GlcNAc...) asparagine glycan. Disulfide bonds link C132–C141, C269–C381, C293–C341, and C517–C535. Residues 577 to 665 (HGHSLEERII…GFMQTLLKVT (89 aa)) enclose the Ig-like C2-type domain. N-linked (GlcNAc...) asparagine glycosylation is present at N591. An intrachain disulfide couples C650 to C723. Residues 677–691 (LLHKDDDGDGSKTKE) are compositionally biased toward basic and acidic residues. Disordered stretches follow at residues 677–698 (LLHK…SMTP) and 729–772 (RDRK…PRSV). The segment covering 729 to 738 (RDRKQRRQRP) has biased composition (basic residues). Residues 750–772 (HMQESKKGRNRRTHEFERAPRSV) show a composition bias toward basic and acidic residues.

This sequence belongs to the semaphorin family. Interacts with PLXND1. As to expression, expressed in the dorsal root ganglia.

Its subcellular location is the secreted. Functionally, may be involved in guiding growing axons towards their targets by forming a molecular boundary that instructs axons to engage in the formation of specific nerve tracts. Binds to neuropilin. Involved in the development of the olfactory system and in neuronal control of puberty. This chain is Semaphorin-3A (Sema3a), found in Rattus norvegicus (Rat).